The sequence spans 925 residues: Translation initiation factor IF-2 (925 aa).

Disordered stretches follow at residues G52–P84 and A98–L326. Residues A57–A68 are compositionally biased toward low complexity. Residues A69–P84 are compositionally biased toward basic and acidic residues. The span at A98–S138 shows a compositional bias: low complexity. 2 stretches are compositionally biased toward pro residues: residues A139–K169 and P193–P207. Gly residues predominate over residues R236–G296. Residues R300–K309 are compositionally biased toward basic residues. The tr-type G domain occupies T421 to L592. The interval G430 to T437 is G1. Position 430 to 437 (G430 to T437) interacts with GTP. Residues G455–H459 form a G2 region. The G3 stretch occupies residues D480–G483. Residues D480 to H484 and N534 to D537 contribute to the GTP site. Residues N534–D537 form a G4 region. The interval S570 to K572 is G5.

The protein belongs to the TRAFAC class translation factor GTPase superfamily. Classic translation factor GTPase family. IF-2 subfamily.

It is found in the cytoplasm. One of the essential components for the initiation of protein synthesis. Protects formylmethionyl-tRNA from spontaneous hydrolysis and promotes its binding to the 30S ribosomal subunits. Also involved in the hydrolysis of GTP during the formation of the 70S ribosomal complex. The protein is Translation initiation factor IF-2 of Mycolicibacterium paratuberculosis (strain ATCC BAA-968 / K-10) (Mycobacterium paratuberculosis).